The sequence spans 154 residues: Myoglobin (154 aa).

The 147-residue stretch at 2–148 (GLSDQEWQQV…FRNDMASKYK (147 aa)) folds into the Globin domain. His-65 provides a ligand contact to nitrite. An O2-binding site is contributed by His-65. His-94 is a heme b binding site.

Belongs to the globin family. Monomeric.

The protein resides in the cytoplasm. Its subcellular location is the sarcoplasm. The enzyme catalyses Fe(III)-heme b-[protein] + nitric oxide + H2O = Fe(II)-heme b-[protein] + nitrite + 2 H(+). It catalyses the reaction H2O2 + AH2 = A + 2 H2O. In terms of biological role, monomeric heme protein which primary function is to store oxygen and facilitate its diffusion within muscle tissues. Reversibly binds oxygen through a pentacoordinated heme iron and enables its timely and efficient release as needed during periods of heightened demand. Depending on the oxidative conditions of tissues and cells, and in addition to its ability to bind oxygen, it also has a nitrite reductase activity whereby it regulates the production of bioactive nitric oxide. Under stress conditions, like hypoxia and anoxia, it also protects cells against reactive oxygen species thanks to its pseudoperoxidase activity. The protein is Myoglobin (MB) of Anas poecilorhyncha (Indian spot-billed duck).